The primary structure comprises 384 residues: Chaperone protein DnaJ (384 aa).

The J domain maps to 5 to 70; it reads DFYQVLGVSK…QKRQMYDQYG (66 aa). Residues 138–216 form a CR-type zinc finger; sequence GKTVELEIPT…CHGHGRKEET (79 aa). The Zn(2+) site is built by cysteine 151, cysteine 154, cysteine 168, cysteine 171, cysteine 190, cysteine 193, cysteine 204, and cysteine 207. CXXCXGXG motif repeat units follow at residues 151–158, 168–175, 190–197, and 204–211; these read CRDCNGSG, CGHCHGSG, CPQCRGTG, and CRTCHGHG.

This sequence belongs to the DnaJ family. As to quaternary structure, homodimer. Requires Zn(2+) as cofactor.

It localises to the cytoplasm. Its function is as follows. Participates actively in the response to hyperosmotic and heat shock by preventing the aggregation of stress-denatured proteins and by disaggregating proteins, also in an autonomous, DnaK-independent fashion. Unfolded proteins bind initially to DnaJ; upon interaction with the DnaJ-bound protein, DnaK hydrolyzes its bound ATP, resulting in the formation of a stable complex. GrpE releases ADP from DnaK; ATP binding to DnaK triggers the release of the substrate protein, thus completing the reaction cycle. Several rounds of ATP-dependent interactions between DnaJ, DnaK and GrpE are required for fully efficient folding. Also involved, together with DnaK and GrpE, in the DNA replication of plasmids through activation of initiation proteins. The protein is Chaperone protein DnaJ of Idiomarina loihiensis (strain ATCC BAA-735 / DSM 15497 / L2-TR).